Consider the following 314-residue polypeptide: 4-hydroxy-3-methylbut-2-enyl diphosphate reductase (314 aa).

Cys-12 serves as a coordination point for [4Fe-4S] cluster. 2 residues coordinate (2E)-4-hydroxy-3-methylbut-2-enyl diphosphate: His-41 and His-74. Dimethylallyl diphosphate-binding residues include His-41 and His-74. The isopentenyl diphosphate site is built by His-41 and His-74. Residue Cys-96 coordinates [4Fe-4S] cluster. Position 124 (His-124) interacts with (2E)-4-hydroxy-3-methylbut-2-enyl diphosphate. Residue His-124 coordinates dimethylallyl diphosphate. His-124 contacts isopentenyl diphosphate. Glu-126 acts as the Proton donor in catalysis. Thr-168 is a binding site for (2E)-4-hydroxy-3-methylbut-2-enyl diphosphate. A [4Fe-4S] cluster-binding site is contributed by Cys-198. Residues Ser-226, Ser-227, Asn-228, and Ser-270 each contribute to the (2E)-4-hydroxy-3-methylbut-2-enyl diphosphate site. 4 residues coordinate dimethylallyl diphosphate: Ser-226, Ser-227, Asn-228, and Ser-270. Isopentenyl diphosphate is bound by residues Ser-226, Ser-227, Asn-228, and Ser-270.

It belongs to the IspH family. [4Fe-4S] cluster is required as a cofactor.

It catalyses the reaction isopentenyl diphosphate + 2 oxidized [2Fe-2S]-[ferredoxin] + H2O = (2E)-4-hydroxy-3-methylbut-2-enyl diphosphate + 2 reduced [2Fe-2S]-[ferredoxin] + 2 H(+). The catalysed reaction is dimethylallyl diphosphate + 2 oxidized [2Fe-2S]-[ferredoxin] + H2O = (2E)-4-hydroxy-3-methylbut-2-enyl diphosphate + 2 reduced [2Fe-2S]-[ferredoxin] + 2 H(+). It participates in isoprenoid biosynthesis; dimethylallyl diphosphate biosynthesis; dimethylallyl diphosphate from (2E)-4-hydroxy-3-methylbutenyl diphosphate: step 1/1. The protein operates within isoprenoid biosynthesis; isopentenyl diphosphate biosynthesis via DXP pathway; isopentenyl diphosphate from 1-deoxy-D-xylulose 5-phosphate: step 6/6. In terms of biological role, catalyzes the conversion of 1-hydroxy-2-methyl-2-(E)-butenyl 4-diphosphate (HMBPP) into a mixture of isopentenyl diphosphate (IPP) and dimethylallyl diphosphate (DMAPP). Acts in the terminal step of the DOXP/MEP pathway for isoprenoid precursor biosynthesis. The chain is 4-hydroxy-3-methylbut-2-enyl diphosphate reductase from Ectopseudomonas mendocina (strain ymp) (Pseudomonas mendocina).